The chain runs to 386 residues: 3-ketoacyl-CoA thiolase (386 aa).

C91 serves as the catalytic Acyl-thioester intermediate. Residues H342 and C372 each act as proton acceptor in the active site.

The protein belongs to the thiolase-like superfamily. Thiolase family. In terms of assembly, heterotetramer of two alpha chains (FadB) and two beta chains (FadA).

Its subcellular location is the cytoplasm. It carries out the reaction an acyl-CoA + acetyl-CoA = a 3-oxoacyl-CoA + CoA. It participates in lipid metabolism; fatty acid beta-oxidation. In terms of biological role, catalyzes the final step of fatty acid oxidation in which acetyl-CoA is released and the CoA ester of a fatty acid two carbons shorter is formed. This Pseudoalteromonas atlantica (strain T6c / ATCC BAA-1087) protein is 3-ketoacyl-CoA thiolase.